Here is a 145-residue protein sequence, read N- to C-terminus: Large ribosomal subunit protein uL15 (145 aa).

Residues 1–54 are disordered; the sequence is MKLNELKYTPGSKKEATRVGRGMASGKGKTATRGHKGQNSRSGGGVRPGFEGGQ. Residues 42–52 show a composition bias toward gly residues; that stretch reads SGGGVRPGFEG.

The protein belongs to the universal ribosomal protein uL15 family. As to quaternary structure, part of the 50S ribosomal subunit.

In terms of biological role, binds to the 23S rRNA. The protein is Large ribosomal subunit protein uL15 of Mycoplasma capricolum subsp. capricolum (strain California kid / ATCC 27343 / NCTC 10154).